A 233-amino-acid chain; its full sequence is Probable dihydroorotate dehydrogenase B (NAD(+)), electron transfer subunit (233 aa).

Positions 1-87 (MYRVVTIEEV…RGPYGHGFIK (87 aa)) constitute an FAD-binding FR-type domain. [2Fe-2S] cluster-binding residues include Cys-202, Cys-207, Cys-210, and Cys-218.

The protein belongs to the PyrK family. Heterotetramer of 2 PyrK and 2 PyrD type B subunits. Requires [2Fe-2S] cluster as cofactor. FAD serves as cofactor.

Its pathway is pyrimidine metabolism; UMP biosynthesis via de novo pathway; orotate from (S)-dihydroorotate (NAD(+) route): step 1/1. Responsible for channeling the electrons from the oxidation of dihydroorotate from the FMN redox center in the PyrD type B subunit to the ultimate electron acceptor NAD(+). The sequence is that of Probable dihydroorotate dehydrogenase B (NAD(+)), electron transfer subunit from Thermococcus kodakarensis (strain ATCC BAA-918 / JCM 12380 / KOD1) (Pyrococcus kodakaraensis (strain KOD1)).